Here is a 320-residue protein sequence, read N- to C-terminus: NAD kinase (320 aa).

The active-site Proton acceptor is D96. NAD(+) contacts are provided by residues 96–97, R101, 170–171, D200, and 211–216; these read DG, NE, and TAYAFS.

This sequence belongs to the NAD kinase family. It depends on a divalent metal cation as a cofactor.

The protein resides in the cytoplasm. The enzyme catalyses NAD(+) + ATP = ADP + NADP(+) + H(+). Its function is as follows. Involved in the regulation of the intracellular balance of NAD and NADP, and is a key enzyme in the biosynthesis of NADP. Catalyzes specifically the phosphorylation on 2'-hydroxyl of the adenosine moiety of NAD to yield NADP. The protein is NAD kinase of Rhodococcus jostii (strain RHA1).